Here is a 425-residue protein sequence, read N- to C-terminus: Glutamyl-tRNA reductase (425 aa).

Residues 47-50, Ser107, 112-114, and Gln118 contribute to the substrate site; these read TCNR and EDQ. Residue Cys48 is the Nucleophile of the active site. 187 to 192 lines the NADP(+) pocket; the sequence is GAGHMA.

It belongs to the glutamyl-tRNA reductase family. In terms of assembly, homodimer.

It catalyses the reaction (S)-4-amino-5-oxopentanoate + tRNA(Glu) + NADP(+) = L-glutamyl-tRNA(Glu) + NADPH + H(+). Its pathway is porphyrin-containing compound metabolism; protoporphyrin-IX biosynthesis; 5-aminolevulinate from L-glutamyl-tRNA(Glu): step 1/2. It participates in porphyrin-containing compound metabolism; chlorophyll biosynthesis. In terms of biological role, catalyzes the NADPH-dependent reduction of glutamyl-tRNA(Glu) to glutamate 1-semialdehyde (GSA). The sequence is that of Glutamyl-tRNA reductase from Roseiflexus castenholzii (strain DSM 13941 / HLO8).